Here is an 87-residue protein sequence, read N- to C-terminus: Probable Fe(2+)-trafficking protein (87 aa).

Belongs to the Fe(2+)-trafficking protein family.

Its function is as follows. Could be a mediator in iron transactions between iron acquisition and iron-requiring processes, such as synthesis and/or repair of Fe-S clusters in biosynthetic enzymes. This chain is Probable Fe(2+)-trafficking protein, found in Francisella tularensis subsp. mediasiatica (strain FSC147).